The following is a 407-amino-acid chain: Flagellar calcium-binding protein TB-44A (407 aa).

The segment at 1–27 (MGCSASKDTTNSKDGAASKGGKDGKTT) is disordered. The segment at 25–399 (KTTADRKVAW…LQVCGDPDGE (375 aa)) is 2 X 186 AA almost perfect repeats. The EF-hand 1 domain maps to 48 to 83 (ESKSRRIELFKRFDTNGTGKLSFREVLDGCYSILKL). Ca(2+) is bound by residues D61, N63, T65, K67, and E72. The tract at residues 110-121 (GVGEEDLVEFLE) is ancestral calcium site 2. 3 consecutive EF-hand domains span residues 130 to 165 (YDIFELTVMFDTMDKDGSLLLELQEFKEALPKWKEW), 167 to 202 (VDITDATTVFNEIDTNGSGVVTFDEFSCWAVTKKLQ), and 237 to 272 (ESKSRRIELFKQFDTNGTGKLGFREVLDGCYSILKL). Residues D143, D145, S147, E154, D180, N182, S184, E191, D250, N252, T254, K256, and E261 each coordinate Ca(2+). The interval 299–310 (GVGEEDLVEFLE) is ancestral calcium site 6. EF-hand domains lie at 319–354 (YDIFELTVMFDTMDKDGSLLLELQEFKEALKKWKEW) and 356–391 (VDITDATTVFNEIDTNGSGVVTFDEFSCWAVTKKLQ). 8 residues coordinate Ca(2+): D332, D334, S336, E343, D369, N371, S373, and E380.

Belongs to the calflagin family.

Its subcellular location is the cell projection. The protein localises to the cilium. It is found in the flagellum. Its function is as follows. May contribute to the rapid motility of the trypanosomes, playing a role either in flagellar structure or in calcium metabolism. Could alternate between a GDP-bound inactive form to a calcium/GTP-bound active form. The protein is Flagellar calcium-binding protein TB-44A of Trypanosoma brucei brucei.